The chain runs to 36 residues: Alpha-conotoxin-like Pu1.3 (36 aa).

The propeptide occupies 1–21 (SDGRNAGADRKGFGLISQMFK). 2 disulfide bridges follow: Cys-24–Cys-30 and Cys-25–Cys-36.

The protein belongs to the conotoxin A superfamily. Expressed by the venom duct.

It localises to the secreted. Its function is as follows. Alpha-conotoxins act on postsynaptic membranes, they bind to the nicotinic acetylcholine receptors (nAChR) and thus inhibit them. This is Alpha-conotoxin-like Pu1.3 from Conus pulicarius (Flea-bitten cone).